Here is a 388-residue protein sequence, read N- to C-terminus: MAAALLLALAFTFLSGQGACAAAGFLKAPMSQEQWAGGSVVLHCEAVGSPMPEIQWWFEGNEPNDSCSQLWDGARLDRVHIHATYRQHAASTLSVDGLAAEDTGTYECRASSDPDRNHLTRPPRVKWVRAQASVVVLEPGTIVTSVQEVDSKTQLTCFLNSSGIDIVGHRWMRGGKVLQEDTLPDLQMKYTVDADDRSGEYSCIFLPEPVGRGNINVEGPPRIKVGKKSEHASEGEFVKLICKSEASHPPVDEWVWFKTSDTGDQTISNGTEANSKYVIISTPELSELIISDLDMNVDPGTYVCNATNSQGSARETISLRVRSRLAALWPFLGIVAEVLVLVTIIFIYEKRRKPDQTLDEDDPGAAPLKGSGSHLNDKDKNVRQRNAT.

Residues 1-22 (MAAALLLALAFTFLSGQGACAA) form the signal peptide. Residues 23–326 (AGFLKAPMSQ…ISLRVRSRLA (304 aa)) are Extracellular-facing. Residues 37 to 120 (GGSVVLHCEA…SSDPDRNHLT (84 aa)) enclose the Ig-like domain. 3 disulfides stabilise this stretch: Cys44/Cys108, Cys157/Cys203, and Cys242/Cys304. The Ig-like C2-type domain occupies 138–219 (EPGTIVTSVQ…VGRGNINVEG (82 aa)). Residues Asn160, Asn269, and Asn305 are each glycosylated (N-linked (GlcNAc...) asparagine). Residues 221-320 (PRIKVGKKSE…GSARETISLR (100 aa)) form the Ig-like V-type domain. Residues 327–347 (ALWPFLGIVAEVLVLVTIIFI) form a helical membrane-spanning segment. Residues 348–388 (YEKRRKPDQTLDEDDPGAAPLKGSGSHLNDKDKNVRQRNAT) are Cytoplasmic-facing. The segment at 355–388 (DQTLDEDDPGAAPLKGSGSHLNDKDKNVRQRNAT) is disordered. A Phosphothreonine modification is found at Thr357. At Ser371 the chain carries Phosphoserine.

In terms of assembly, homooligomer. Interacts with NXNL1, SLC2A1 and SLC16A1/GLUT1. Interacts with XKR8; promoting its localization at the cell membrane. As to quaternary structure, homooligomer. Interacts with SLC16A1; interaction mediates SLC16A1 targeting to the plasma membrane. Interacts with SLC16A3; interaction mediates SLC16A3 targeting to the plasma membrane. Interacts with VEGFA, KDR/VEGFR2, PPIA/CYPA, SLC16A12, SLC16A11, ATP1B2, MAG, L1CAM and AJAP1. Interacts with PPIL2; regulates BSG transport to the cell membrane. Interacts with SLC16A6; this interaction mediates targeting to the plasma membrane. In terms of tissue distribution, expressed in the skeletal muscle, liver, small intestine, kidney, testis, brain, heart and spleen. Also present in various immature cells and endothelia.

The protein localises to the cell membrane. It is found in the photoreceptor inner segment. It localises to the cell projection. Its subcellular location is the cilium. The protein resides in the photoreceptor outer segment. The protein localises to the endoplasmic reticulum membrane. It is found in the basolateral cell membrane. In terms of biological role, essential for normal retinal maturation and development. Acts as a retinal cell surface receptor for NXNL1 and plays an important role in NXNL1-mediated survival of retinal cone photoreceptors. In association with glucose transporter SLC16A1/GLUT1 and NXNL1, promotes retinal cone survival by enhancing aerobic glycolysis and accelerating the entry of glucose into photoreceptors. Its function is as follows. Signaling receptor for cyclophilins, essential for PPIA/CYPA and PPIB/CYPB-dependent signaling related to chemotaxis and adhesion of immune cells. Plays an important role in targeting the monocarboxylate transporters SLC16A1/GLUT1 and SLC16A3 to the plasma membrane. Acts as a coreceptor for vascular endothelial growth factor receptor 2 (KDR/VEGFR2) in endothelial cells enhancing its VEGFA-mediated activation and downstream signaling. Promotes angiogenesis through EPAS1/HIF2A-mediated up-regulation of VEGFA and KDR/VEGFR2 in endothelial cells. Plays an important role in spermatogenesis; mediates interactions between germ cells and Sertoli cell and is essential for the development/differentiation of germ cells to round spermatids. In Rattus norvegicus (Rat), this protein is Basigin (Bsg).